Reading from the N-terminus, the 344-residue chain is Methionine import ATP-binding protein MetN (344 aa).

The ABC transporter domain maps to 2–241; that stretch reads IELQGLSQRF…PQHDVTRAMI (240 aa). 38 to 45 contacts ATP; sequence GRSGAGKS.

Belongs to the ABC transporter superfamily. Methionine importer (TC 3.A.1.24) family. In terms of assembly, the complex is composed of two ATP-binding proteins (MetN), two transmembrane proteins (MetI) and a solute-binding protein (MetQ).

It localises to the cell inner membrane. It catalyses the reaction L-methionine(out) + ATP + H2O = L-methionine(in) + ADP + phosphate + H(+). The enzyme catalyses D-methionine(out) + ATP + H2O = D-methionine(in) + ADP + phosphate + H(+). Part of the ABC transporter complex MetNIQ involved in methionine import. Responsible for energy coupling to the transport system. This Cupriavidus necator (strain ATCC 17699 / DSM 428 / KCTC 22496 / NCIMB 10442 / H16 / Stanier 337) (Ralstonia eutropha) protein is Methionine import ATP-binding protein MetN.